A 334-amino-acid chain; its full sequence is tRNA-dihydrouridine synthase B (334 aa).

Residues 16–18 (PMA) and Q70 contribute to the FMN site. Residue C100 is the Proton donor of the active site. FMN contacts are provided by residues K139, 200–202 (NGD), and 224–225 (GR).

Belongs to the Dus family. DusB subfamily. It depends on FMN as a cofactor.

The catalysed reaction is a 5,6-dihydrouridine in tRNA + NAD(+) = a uridine in tRNA + NADH + H(+). It catalyses the reaction a 5,6-dihydrouridine in tRNA + NADP(+) = a uridine in tRNA + NADPH + H(+). Its function is as follows. Catalyzes the synthesis of 5,6-dihydrouridine (D), a modified base found in the D-loop of most tRNAs, via the reduction of the C5-C6 double bond in target uridines. The chain is tRNA-dihydrouridine synthase B from Serratia marcescens.